The sequence spans 283 residues: E3 ubiquitin-protein ligase SGR9, amyloplastic (283 aa).

The transit peptide at 1–32 (MEDENTTIIMASLSALSPSHLTNLTHSILSIS) directs the protein to the amyloplast. The RING-type; atypical zinc finger occupies 214 to 255 (CVICKEEMSEGRDVCEMPCQHFFHWKCILPWLSKKNTCPFCR).

Post-translationally, auto-ubiquitinated as part of the enzymatic reaction. In terms of tissue distribution, expressed in seedlings, hypocotyls, roots and stems. Present especially in hypocotyl and inflorescence endodermis, as well as in root cap columella, tissues that act as statocytes.

It localises to the plastid. The protein resides in the amyloplast. It catalyses the reaction S-ubiquitinyl-[E2 ubiquitin-conjugating enzyme]-L-cysteine + [acceptor protein]-L-lysine = [E2 ubiquitin-conjugating enzyme]-L-cysteine + N(6)-ubiquitinyl-[acceptor protein]-L-lysine.. It participates in protein modification; protein ubiquitination. In terms of biological role, E3 ubiquitin-protein ligase which accepts ubiquitin from an E2 ubiquitin-conjugating enzyme in the form of a thioester and then directly transfers the ubiquitin to targeted substrates. Modulates amyloplast dynamics and sedimentation in statocytes during inflorescence, hypocotyl and root gravitropism, probably by regulating amyloplast interaction with actin filaments (AFs) in endodermal cells. The protein is E3 ubiquitin-protein ligase SGR9, amyloplastic (SGR9) of Arabidopsis thaliana (Mouse-ear cress).